A 338-amino-acid chain; its full sequence is Taste receptor type 2 member 39 (338 aa).

The Extracellular portion of the chain corresponds to 1-30; that stretch reads MLGRCFPPNTKEKQQLRMIKLCDPAESELS. The helical transmembrane segment at 31–51 threads the bilayer; that stretch reads PFLITLTLAVLLAEYLTGIIA. The Cytoplasmic portion of the chain corresponds to 52-74; sequence NGFITAIHAAECVQNKSVSTSGR. A helical transmembrane segment spans residues 75 to 95; it reads ILVFLSVSRIALQSLMMLEIT. Residues 96–116 lie on the Extracellular side of the membrane; it reads ISSTSLSFYSEDTVYYAFKIS. Residues 117-137 traverse the membrane as a helical segment; sequence FIFLNFCSLWFAAWLSFFYFV. Residues 138–156 lie on the Cytoplasmic side of the membrane; that stretch reads KIANFSYPLFLKLRWRISG. A helical transmembrane segment spans residues 157-177; that stretch reads LIPWLLWLSVFISFSHSMFCI. The Extracellular segment spans residues 178–205; it reads NICTGYCDNSFPIHSSNSTEKTYFSEIS. N-linked (GlcNAc...) asparagine glycosylation occurs at Asn194. The chain crosses the membrane as a helical span at residues 206–226; that stretch reads VVSLAFFFNLGIVIPLIMFIL. The Cytoplasmic portion of the chain corresponds to 227-262; the sequence is AAILLILSLKRHTLYMXSNATGSKDPSMEAHIGAIK. The helical transmembrane segment at 263-283 threads the bilayer; that stretch reads ATSYFLILYIFNAVALFIYLS. The Extracellular portion of the chain corresponds to 284-291; the sequence is NMFDINSL. The helical transmembrane segment at 292 to 312 threads the bilayer; sequence WNTLCQIIMAAYPASHSILLI. Over 313-338 the chain is Cytoplasmic; it reads KDNPGLRRAWKQLQHRLHLYPKEWTL.

The protein belongs to the G-protein coupled receptor T2R family.

Its subcellular location is the membrane. In terms of biological role, receptor that may play a role in the perception of bitterness and is gustducin-linked. May play a role in sensing the chemical composition of the gastrointestinal content. The activity of this receptor may stimulate alpha gustducin, mediate PLC-beta-2 activation and lead to the gating of TRPM5. This is Taste receptor type 2 member 39 (TAS2R39) from Papio hamadryas (Hamadryas baboon).